Consider the following 351-residue polypeptide: MSGRRYSQISQQEGSSSSDDSDSQQKKTKRTVAHRSPNTTLNGMPRVDSRARPNENSGQSKSSNGRVDTDRKMDLLRKRSNLVHQTLLLEKEVRVRRNAINQRDDSFLSGFIKSLLEIDSSVVIYNTENPDNPKTKQVMPSAEPKKHVKLNSSISSIRFTQHEFEAESEKIIHHSLKGDIEYLPSFKFLLEIKVRTIDYALLFITYKIPHFARKELSSFSDSAIQCLDIVALLRAFSLFAHHYSYRCNTWFYLSKHMKKVASANMDAQCFYVQNSFYKITILYEIKFDDLGFVQPNYCISYILKNQNEKIVSITSKLLNQLDKRFSEFVSLFGFREGSLLLLQALFKPHLG.

The disordered stretch occupies residues 1 to 71 (MSGRRYSQIS…SSNGRVDTDR (71 aa)). The segment covering 7 to 18 (SQISQQEGSSSS) has biased composition (low complexity). Over residues 54–66 (NENSGQSKSSNGR) the composition is skewed to polar residues.

This sequence belongs to the CENP-P/CTF19 family. As to quaternary structure, component of the heterotetrameric kinetochore subcomplex COMA, which consists of fta2, fta7, mal2 and mis17. The COMA subcomplex is part of a larger constitutive centromere-associated network (CCAN) (also known as central kinetochore Sim4 complex in fission yeast), which is composed of at least cnl2, cnp3, cnp20, fta1, fta2, fta3, fta4, fta6, fta7, mal2, mhf1, mhf2, mis6, mis15, mis17, sim4 and wip1.

The protein resides in the nucleus. It is found in the chromosome. The protein localises to the centromere. Its subcellular location is the kinetochore. Its function is as follows. Component of the kinetochore, a multiprotein complex that assembles on centromeric DNA and attaches chromosomes to spindle microtubules, mediating chromosome segregation and sister chromatid segregation during meiosis and mitosis. Component of the inner kinetochore COMA complex, which connects centromere-associated proteins and the outer kinetochore. COMA interacts with other inner kinetochore proteins to form the inner kinetochore constitutive centromere-associated network (CCAN), which serves as a structural platform for outer kinetochore assembly. Fta2, fta3 and fta4 associate with the central core (cnt) and inner repeat (inr) region of the centromere. The polypeptide is Inner kinetochore subunit fta2 (fta2) (Schizosaccharomyces pombe (strain 972 / ATCC 24843) (Fission yeast)).